We begin with the raw amino-acid sequence, 700 residues long: Elongation factor G (700 aa).

In terms of domain architecture, tr-type G spans 8–290; sequence ERYRNIGISA…AVIDYLPAPT (283 aa). Residues 17 to 24, 88 to 92, and 142 to 145 contribute to the GTP site; these read AHIDAGKT, DTPGH, and NKMD.

This sequence belongs to the TRAFAC class translation factor GTPase superfamily. Classic translation factor GTPase family. EF-G/EF-2 subfamily.

It is found in the cytoplasm. In terms of biological role, catalyzes the GTP-dependent ribosomal translocation step during translation elongation. During this step, the ribosome changes from the pre-translocational (PRE) to the post-translocational (POST) state as the newly formed A-site-bound peptidyl-tRNA and P-site-bound deacylated tRNA move to the P and E sites, respectively. Catalyzes the coordinated movement of the two tRNA molecules, the mRNA and conformational changes in the ribosome. The protein is Elongation factor G (fusA) of Pasteurella multocida (strain Pm70).